Reading from the N-terminus, the 68-residue chain is Large ribosomal subunit protein bL33c (68 aa).

This sequence belongs to the bacterial ribosomal protein bL33 family.

It localises to the plastid. Its subcellular location is the chloroplast. This chain is Large ribosomal subunit protein bL33c, found in Piper cenocladum (Ant piper).